The chain runs to 353 residues: MNRSVVLILLLNIIVSVVIVLSSHSWFSVCDGLELNTLSVLPILCGQFSPRGVESTIKYFLVQAFSAAMILNVALVQLWLCSSWSVSCPLNSFSSIVLTLALCLKLGLFPCHFWFPDVLQGLSFLQGLLLSTWQKVAPFIILVSVCNIISINVLTTLGCLSVLVGGWGGLNQSQVRKIMAFSSISHLGWICSVLSYSIYVGCIMFVVYIVLSSTVFLINNEGNLYNLSSLARLVYCNNVMGNVLVLVILSLGGLPPLTGFLNKFIALECLLSNNLLVPCAILIVGSLLSLFFYLRISFNSVLCLFPQHSMMLFSWRNVSGYYGNTSFYTVLLSILSSMSILGLLLVPALWSYH.

The next 8 helical transmembrane spans lie at 4–24 (SVVL…LSSH), 60–80 (FLVQ…QLWL), 96–116 (IVLT…FWFP), 139–159 (FIIL…TLGC), 198–218 (IYVG…VFLI), 241–261 (GNVL…TGFL), 274–294 (NLLV…FFYL), and 330–350 (VLLS…PALW).

It belongs to the complex I subunit 2 family.

Its subcellular location is the mitochondrion inner membrane. It carries out the reaction a ubiquinone + NADH + 5 H(+)(in) = a ubiquinol + NAD(+) + 4 H(+)(out). Core subunit of the mitochondrial membrane respiratory chain NADH dehydrogenase (Complex I) that is believed to belong to the minimal assembly required for catalysis. Complex I functions in the transfer of electrons from NADH to the respiratory chain. The immediate electron acceptor for the enzyme is believed to be ubiquinone. This chain is NADH-ubiquinone oxidoreductase chain 2 (ND2), found in Pisaster ochraceus (Ochre sea star).